The chain runs to 404 residues: Sorting nexin-5 (404 aa).

A2 is subject to N-acetylalanine. Residues L25 to L172 form the PX domain. A 1,2-diacyl-sn-glycero-3-phospho-(1D-myo-inositol-4,5-bisphosphate) is bound by residues S40–K46, F99–K105, and E113–M116. Residues D169–V261 form an interaction with DOCK1 region. The interval F183–T200 is membrane-binding amphipathic helix. Phosphoserine is present on S193. A BAR domain is found at V202–N404. K275 is modified (N6-acetyllysine).

Belongs to the sorting nexin family. As to quaternary structure, forms heterodimers with BAR domain-containing sorting nexins SNX1 and SNX2; does not homodimerize. The heterodimers are proposed to self-assemble into helical arrays on the membrane to stabilize and expand local membrane curvature underlying endosomal tubule formation. Thought to be a component of the originally described retromer complex (also called SNX-BAR retromer) which is a pentamer containing the heterotrimeric retromer cargo-selective complex (CSC), also described as vacuolar protein sorting subcomplex (VPS), and a heterodimeric membrane-deforming subcomplex formed between SNX1 or SNX2 and SNX5 or SNX6 (also called SNX-BAR subcomplex); the respective CSC and SNX-BAR subcomplexes associate with low affinity. Interacts with SNX1, SNX2, VPS26A, VPS29, VPS35, DCTN1, DOCK1, MIB1, PIP5K1C isoform 3. Interacts with HGS; increased by PIP5K1C isoform 3 kinase activity and by PtdIns(3P) and/or PtdIns(3,4)P2. (Microbial infection) Interacts with human cytomegalovirus proteins UL35 and UL35A; these interactions inhibit the ability of USP7 to form nuclear bodies.

The protein localises to the endosome. The protein resides in the early endosome. It localises to the early endosome membrane. It is found in the cell membrane. Its subcellular location is the cytoplasmic vesicle membrane. The protein localises to the cytoplasm. The protein resides in the cell projection. It localises to the phagocytic cup. It is found in the ruffle. Functionally, involved in several stages of intracellular trafficking. Interacts with membranes containing phosphatidylinositol 3-phosphate (PtdIns(3P)) or phosphatidylinositol 3,4-bisphosphate (PtdIns(3,4)P2). Acts in part as component of the retromer membrane-deforming SNX-BAR subcomplex. The SNX-BAR retromer mediates retrograde transport of cargo proteins from endosomes to the trans-Golgi network (TGN) and is involved in endosome-to-plasma membrane transport for cargo protein recycling. The SNX-BAR subcomplex functions to deform the donor membrane into a tubular profile called endosome-to-TGN transport carrier (ETC). Does not have in vitro vesicle-to-membrane remodeling activity. Involved in retrograde transport of lysosomal enzyme receptor IGF2R. May function as link between endosomal transport vesicles and dynactin. Plays a role in the internalization of EGFR after EGF stimulation. Involved in EGFR endosomal sorting and degradation; the function involves PIP5K1C isoform 3 and is retromer-independent. Together with PIP5K1C isoform 3 facilitates HGS interaction with ubiquitinated EGFR, which initiates EGFR sorting to intraluminal vesicles (ILVs) of the multivesicular body for subsequent lysosomal degradation. Involved in E-cadherin sorting and degradation; inhibits PIP5K1C isoform 3-mediated E-cadherin degradation. Plays a role in macropinocytosis. This is Sorting nexin-5 (SNX5) from Homo sapiens (Human).